The primary structure comprises 505 residues: MGETLGDSLIDPESDSFADTLSASTSQETTMVDTEMPFWPTNFGISSVDLSVMDDHSHSFDIKPFTTVDFSSISTPHYEDIPFSRADPMVADYKYDLKLQEYQSAIKVEPASPPYYSEKTQLYNKPHEEPSNSLMAIECRVCGDKASGFHYGVHACEGCKGFFRRTIRLKLIYDRCDLNCRIHKKSRNKCQYCRFQKCLAVGMSHNAIRFGRMPQAEKEKLLAEISSDIDQLNPESADLRALAKHLYDSYIKSFPLTKAKARAILTGKTTDKSPFVIYDMNSLMMGEDKIKFKHITPLQEQSKEVAIRIFQGCQFRSVEAVQEITEYAKSIPGFVNLDLNDQVTLLKYGVHEIIYTMLASLMNKDGVLISEGQGFMTREFLKSLRKPFGDFMEPKFEFAVKFNALELDDSDLAIFIAVIILSGDRPGLLNVKPIEDIQDNLLQALELQLKLNHPESSQLFAKLLQKMTDLRQIVTEHVQLLQVIKKTETDMSLHPLLQEIYKDLY.

The tract at residues 1–26 (MGETLGDSLIDPESDSFADTLSASTS) is disordered. Over residues 17-26 (FADTLSASTS) the composition is skewed to polar residues. The residue at position 112 (Ser-112) is a Phosphoserine; by MAPK. Positions 136-210 (AIECRVCGDK…VGMSHNAIRF (75 aa)) form a DNA-binding region, nuclear receptor. NR C4-type zinc fingers lie at residues 139 to 159 (CRVC…CEGC) and 176 to 198 (CDLN…FQKC). The tract at residues 205 to 280 (HNAIRFGRMP…DKSPFVIYDM (76 aa)) is interaction with FAM120B. Residues 238 to 503 (DLRALAKHLY…HPLLQEIYKD (266 aa)) form the NR LBD domain. A Glycyl lysine isopeptide (Lys-Gly) (interchain with G-Cter in ubiquitin) cross-link involves residue Lys-252. The short motif at 495–503 (PLLQEIYKD) is the 9aaTAD element.

This sequence belongs to the nuclear hormone receptor family. NR1 subfamily. In terms of assembly, interacts with FOXO1 (acetylated form). Heterodimer with other nuclear receptors, such as RXRA. The heterodimer with the retinoic acid receptor RXRA is called adipocyte-specific transcription factor ARF6. Interacts with NCOA6 coactivator, leading to a strong increase in transcription of target genes. Interacts with coactivator PPARBP, leading to a mild increase in transcription of target genes. Interacts with NOCA7 in a ligand-inducible manner. Interacts with NCOA1 and NCOA2 LXXLL motifs. Interacts with ASXL1, ASXL2, DNTTIP2, FAM120B, MAP2K1/MEK1, NR0B2, PDPK1, PRDM16, PRMT2 and TGFB1I1. Interacts (when activated by agonist) with PPP5C. Interacts with HELZ2 and THRAP3; the interaction stimulates the transcriptional activity of PPARG. Interacts with PER2, the interaction is ligand dependent and blocks PPARG recruitment to target promoters. Interacts with NOCT. Interacts with ACTN4. Interacts (when in the liganded conformation) with GPS2. Interacts with CRY1 and CRY2 in a ligand-dependent manner. In the absence of hormonal ligand, interacts with TACC1. In macrophages, interacts with PAQR3 and STUB1; the interactions promote PPARG poylubiquitination and STUB1-mediated degradation. Phosphorylated at basal conditions and dephosphorylated when treated with the ligand. May be dephosphorylated by PPP5C. The phosphorylated form may be inactive and dephosphorylation induces adipogenic activity. In terms of processing, ubiquitinated by E3 ubiquitin-protein ligase complex containing FBXO9; leading to proteasomal degradation. Ubiquitinated at Lys-252 by TRIM55 leading to proteasomal degradation. Ubiquitinated by E3 ubiquitin-protein ligase STUB1/CHIP; leading to proteasomal degradation.

It is found in the nucleus. It localises to the cytoplasm. With respect to regulation, PDPK1 activates its transcriptional activity independently of its kinase activity. In terms of biological role, nuclear receptor that binds peroxisome proliferators such as hypolipidemic drugs and fatty acids. Once activated by a ligand, the nuclear receptor binds to DNA specific PPAR response elements (PPRE) and modulates the transcription of its target genes, such as acyl-CoA oxidase. It therefore controls the peroxisomal beta-oxidation pathway of fatty acids. Key regulator of adipocyte differentiation and glucose homeostasis. ARF6 acts as a key regulator of the tissue-specific adipocyte P2 (aP2) enhancer. Acts as a critical regulator of gut homeostasis by suppressing NF-kappa-B-mediated pro-inflammatory responses. Plays a role in the regulation of cardiovascular circadian rhythms by regulating the transcription of BMAL1 in the blood vessels. This chain is Peroxisome proliferator-activated receptor gamma (PPARG), found in Canis lupus familiaris (Dog).